Consider the following 158-residue polypeptide: Ribonuclease H (158 aa).

The region spanning 9–155 (AFKPVELYTD…CDKLAVAAYQ (147 aa)) is the RNase H type-1 domain. Residues Asp18, Glu58, Asp80, and Asp147 each coordinate Mg(2+).

Belongs to the RNase H family. As to quaternary structure, monomer. It depends on Mg(2+) as a cofactor.

It localises to the cytoplasm. The catalysed reaction is Endonucleolytic cleavage to 5'-phosphomonoester.. Functionally, endonuclease that specifically degrades the RNA of RNA-DNA hybrids. The polypeptide is Ribonuclease H (Rhodopirellula baltica (strain DSM 10527 / NCIMB 13988 / SH1)).